The following is a 48-amino-acid chain: Sperm protamine R3 isoform 1 (48 aa).

Residues 1-29 (ARRRHSMKKKRKSVRRRKTRKNQRKRKNS) show a composition bias toward basic residues. A disordered region spans residues 1 to 48 (ARRRHSMKKKRKSVRRRKTRKNQRKRKNSLGRSFKQHGFLKQPPRFRP).

As to expression, testis.

The protein localises to the nucleus. Its subcellular location is the chromosome. Protamines substitute for histones in the chromatin of sperm during the haploid phase of spermatogenesis. They compact sperm DNA into a highly condensed, stable and inactive complex. The sequence is that of Sperm protamine R3 isoform 1 from Hydrolagus colliei (Spotted ratfish).